The following is a 447-amino-acid chain: Phosphoglucosamine mutase (447 aa).

Ser-102 acts as the Phosphoserine intermediate in catalysis. Residues Ser-102, Asp-241, Asp-243, and Asp-245 each contribute to the Mg(2+) site. Residue Ser-102 is modified to Phosphoserine.

It belongs to the phosphohexose mutase family. Mg(2+) serves as cofactor. In terms of processing, activated by phosphorylation.

The enzyme catalyses alpha-D-glucosamine 1-phosphate = D-glucosamine 6-phosphate. Catalyzes the conversion of glucosamine-6-phosphate to glucosamine-1-phosphate. The polypeptide is Phosphoglucosamine mutase (Methylococcus capsulatus (strain ATCC 33009 / NCIMB 11132 / Bath)).